The chain runs to 180 residues: MSALTIFADNGASEPLWQSTDADAIREQLNAQGVRFERWQADRDLGDDPTPEAVLTAYQHAIDLLVAEKGYQSWDVISMRADNPQKEALRGKFLNEHTHGEDEVRFFVEGAGLFCLHIGDKVYQVLCEKNDLISVPAGTPHWFDMGSEPHFTAIRIFDNPEGWIANFTGSPIAEAYPRLA.

Fe(2+) contacts are provided by histidine 97, histidine 99, glutamate 103, and histidine 141. Residues histidine 97, histidine 99, glutamate 103, and histidine 141 each coordinate Ni(2+).

It belongs to the acireductone dioxygenase (ARD) family. Monomer. The cofactor is Fe(2+). Ni(2+) serves as cofactor.

The enzyme catalyses 1,2-dihydroxy-5-(methylsulfanyl)pent-1-en-3-one + O2 = 3-(methylsulfanyl)propanoate + CO + formate + 2 H(+). The catalysed reaction is 1,2-dihydroxy-5-(methylsulfanyl)pent-1-en-3-one + O2 = 4-methylsulfanyl-2-oxobutanoate + formate + 2 H(+). The protein operates within amino-acid biosynthesis; L-methionine biosynthesis via salvage pathway; L-methionine from S-methyl-5-thio-alpha-D-ribose 1-phosphate: step 5/6. Functionally, catalyzes 2 different reactions between oxygen and the acireductone 1,2-dihydroxy-3-keto-5-methylthiopentene (DHK-MTPene) depending upon the metal bound in the active site. Fe-containing acireductone dioxygenase (Fe-ARD) produces formate and 2-keto-4-methylthiobutyrate (KMTB), the alpha-ketoacid precursor of methionine in the methionine recycle pathway. Ni-containing acireductone dioxygenase (Ni-ARD) produces methylthiopropionate, carbon monoxide and formate, and does not lie on the methionine recycle pathway. The chain is Acireductone dioxygenase from Cronobacter sakazakii (Enterobacter sakazakii).